The chain runs to 102 residues: Co-chaperonin GroES (102 aa).

Belongs to the GroES chaperonin family. In terms of assembly, heptamer of 7 subunits arranged in a ring. Interacts with the chaperonin GroEL.

The protein localises to the cytoplasm. In terms of biological role, together with the chaperonin GroEL, plays an essential role in assisting protein folding. The GroEL-GroES system forms a nano-cage that allows encapsulation of the non-native substrate proteins and provides a physical environment optimized to promote and accelerate protein folding. GroES binds to the apical surface of the GroEL ring, thereby capping the opening of the GroEL channel. This is Co-chaperonin GroES from Streptomyces griseus subsp. griseus (strain JCM 4626 / CBS 651.72 / NBRC 13350 / KCC S-0626 / ISP 5235).